A 278-amino-acid chain; its full sequence is Urease accessory protein UreD (278 aa).

Belongs to the UreD family. As to quaternary structure, ureD, UreF and UreG form a complex that acts as a GTP-hydrolysis-dependent molecular chaperone, activating the urease apoprotein by helping to assemble the nickel containing metallocenter of UreC. The UreE protein probably delivers the nickel.

The protein localises to the cytoplasm. Functionally, required for maturation of urease via the functional incorporation of the urease nickel metallocenter. The chain is Urease accessory protein UreD from Escherichia coli.